The primary structure comprises 139 residues: Transthyretin-like protein 5 (139 aa).

A signal peptide spans 1–15 (MKLIILLCLVASSYA).

It belongs to the nematode transthyretin-like family.

It localises to the secreted. The chain is Transthyretin-like protein 5 (ttr-5) from Caenorhabditis elegans.